Reading from the N-terminus, the 90-residue chain is Probable Fe(2+)-trafficking protein (90 aa).

The protein belongs to the Fe(2+)-trafficking protein family.

Functionally, could be a mediator in iron transactions between iron acquisition and iron-requiring processes, such as synthesis and/or repair of Fe-S clusters in biosynthetic enzymes. In Aeromonas hydrophila subsp. hydrophila (strain ATCC 7966 / DSM 30187 / BCRC 13018 / CCUG 14551 / JCM 1027 / KCTC 2358 / NCIMB 9240 / NCTC 8049), this protein is Probable Fe(2+)-trafficking protein.